Here is a 531-residue protein sequence, read N- to C-terminus: Apolipoprotein N-acyltransferase (531 aa).

A run of 7 helical transmembrane segments spans residues 8 to 28 (IILL…LLAV), 34 to 54 (FGIF…IDGV), 69 to 89 (PAAI…WWLG), 105 to 125 (LTVV…VVIA), 136 to 156 (IAAL…LFTG), 178 to 198 (VVNL…PALI), and 206 to 226 (AGLA…FYRL). One can recognise a CN hydrolase domain in the interval 243 to 493 (VQPVIDQAKK…RGVIDTILPG (251 aa)). The Proton acceptor role is filled by Glu287. Residue Lys351 is part of the active site. Cys405 functions as the Nucleophile in the catalytic mechanism. The chain crosses the membrane as a helical span at residues 507-527 (IFWLTTGILFLVAAISRLGFN).

Belongs to the CN hydrolase family. Apolipoprotein N-acyltransferase subfamily.

It localises to the cell inner membrane. The enzyme catalyses N-terminal S-1,2-diacyl-sn-glyceryl-L-cysteinyl-[lipoprotein] + a glycerophospholipid = N-acyl-S-1,2-diacyl-sn-glyceryl-L-cysteinyl-[lipoprotein] + a 2-acyl-sn-glycero-3-phospholipid + H(+). It functions in the pathway protein modification; lipoprotein biosynthesis (N-acyl transfer). Its function is as follows. Catalyzes the phospholipid dependent N-acylation of the N-terminal cysteine of apolipoprotein, the last step in lipoprotein maturation. This is Apolipoprotein N-acyltransferase from Rhizobium meliloti (strain 1021) (Ensifer meliloti).